Consider the following 362-residue polypeptide: Methylthioribose-1-phosphate isomerase (362 aa).

The Proton donor role is filled by Asp252.

The protein belongs to the eIF-2B alpha/beta/delta subunits family. MtnA subfamily.

The protein resides in the cytoplasm. Its subcellular location is the nucleus. It carries out the reaction 5-(methylsulfanyl)-alpha-D-ribose 1-phosphate = 5-(methylsulfanyl)-D-ribulose 1-phosphate. It functions in the pathway amino-acid biosynthesis; L-methionine biosynthesis via salvage pathway; L-methionine from S-methyl-5-thio-alpha-D-ribose 1-phosphate: step 1/6. Functionally, catalyzes the interconversion of methylthioribose-1-phosphate (MTR-1-P) into methylthioribulose-1-phosphate (MTRu-1-P). This is Methylthioribose-1-phosphate isomerase from Drosophila persimilis (Fruit fly).